We begin with the raw amino-acid sequence, 88 residues long: MALKIRLKRMGMKKTPFYRLVVTEATSPRDGRFVEEIGYYDPTKNPVVLNIDEEKALNWLLKGATPTETTRALLSKAGVLKKFDEARK.

The protein belongs to the bacterial ribosomal protein bS16 family.

This is Small ribosomal subunit protein bS16 from Symbiobacterium thermophilum (strain DSM 24528 / JCM 14929 / IAM 14863 / T).